A 508-amino-acid chain; its full sequence is Lysine--tRNA ligase (508 aa).

Mg(2+) contacts are provided by glutamate 418 and glutamate 425.

Belongs to the class-II aminoacyl-tRNA synthetase family. In terms of assembly, homodimer. The cofactor is Mg(2+).

The protein localises to the cytoplasm. It carries out the reaction tRNA(Lys) + L-lysine + ATP = L-lysyl-tRNA(Lys) + AMP + diphosphate. The chain is Lysine--tRNA ligase from Burkholderia mallei (strain NCTC 10247).